Consider the following 590-residue polypeptide: L-erythrulose kinase (590 aa).

One can recognise a DhaK domain in the interval 7–331 (QPSSFARELT…WRAPADAPAF (325 aa)). The Tele-hemiaminal-histidine intermediate role is filled by histidine 217. In terms of domain architecture, DhaL spans 366–568 (HCVAAALNAA…LAMILDAVSA (203 aa)). ADP is bound by residues 398–401 (HGIG), 441–442 (TS), glycine 483, arginine 540, and 553–555 (DAG).

The enzyme catalyses L-erythrulose + ATP = L-erythrulose 1-phosphate + ADP + H(+). The protein operates within carbohydrate metabolism. Involved in catabolism of D-apiose. Catalyzes the phosphorylation of L-erythrulose to L-erythrulose 1-phosphate. Can also phosphorylate D-erythrulose and dihydroxyacetone in vitro. This Pectobacterium atrosepticum (strain SCRI 1043 / ATCC BAA-672) (Erwinia carotovora subsp. atroseptica) protein is L-erythrulose kinase.